We begin with the raw amino-acid sequence, 285 residues long: Undecaprenyl-diphosphatase (285 aa).

The next 7 membrane-spanning stretches (helical) occupy residues 40 to 60 (GPLIDVAVHVGSLLAIIVYFF), 89 to 109 (LFWWIVLGTIPAVAFGLAIKL), 137 to 157 (DLIAFNLIVYGIALGLADWLG), 171 to 191 (GLIVGIAQALAIIPGTSRSGV), 209 to 229 (FSFLLSIPAVAGAGVLIVPEI), 241 to 261 (LIAGVLTFIAAFLTMAFLMNF), and 265 to 285 (ASMLVFVFYRVAMGCALLAFF).

It belongs to the UppP family.

Its subcellular location is the cell inner membrane. The enzyme catalyses di-trans,octa-cis-undecaprenyl diphosphate + H2O = di-trans,octa-cis-undecaprenyl phosphate + phosphate + H(+). Its function is as follows. Catalyzes the dephosphorylation of undecaprenyl diphosphate (UPP). Confers resistance to bacitracin. The chain is Undecaprenyl-diphosphatase from Erythrobacter litoralis (strain HTCC2594).